Consider the following 404-residue polypeptide: Caspase-1 (404 aa).

A CARD domain is found at 1-91 (MADKVLKDKR…HLAQTLGLSS (91 aa)). Residues 1–119 (MADKVLKDKR…SLPAFVENMP (119 aa)) constitute a propeptide that is removed on maturation. Residues histidine 237 and cysteine 285 contribute to the active site. Positions 298-316 (SPKASTDSWTHQPLMLQSD) are excised as a propeptide. Serine 302 carries the post-translational modification Phosphoserine.

This sequence belongs to the peptidase C14A family. As to quaternary structure, heterotetramer that consists of two anti-parallel arranged heterodimers, each one formed by a 20 kDa (Caspase-1 subunit p20) and a 10 kDa (Caspase-1 subunit p10) subunit. May be a component of the inflammasome, a protein complex which also includes PYCARD, CARD8 and NLRP2 and whose function would be the activation of pro-inflammatory caspases. Component of the AIM2 PANoptosome complex, a multiprotein complex that drives inflammatory cell death (PANoptosis). Both the p10 and p20 subunits interact with MEFV. Interacts with CARD17P/INCA and CARD18. Interacts with SERPINB1; this interaction regulates CASP1 activity. In terms of assembly, heterotetramer that consists of two anti-parallel arranged heterodimers, each one formed by a 20 kDa (Caspase-1 subunit p20) and a 10 kDa (Caspase-1 subunit p10) subunit. Post-translationally, the two subunits are derived from the precursor sequence by an autocatalytic mechanism. In terms of processing, ubiquitinated via 'Lys-11'-linked polyubiquitination. Deubiquitinated by USP8.

Its subcellular location is the cytoplasm. The protein localises to the cell membrane. The catalysed reaction is Strict requirement for an Asp residue at position P1 and has a preferred cleavage sequence of Tyr-Val-Ala-Asp-|-.. In terms of biological role, thiol protease involved in a variety of inflammatory processes by proteolytically cleaving other proteins, such as the precursors of the inflammatory cytokines interleukin-1 beta (IL1B) and interleukin 18 (IL18) as well as the pyroptosis inducer Gasdermin-D (GSDMD), into active mature peptides. Plays a key role in cell immunity as an inflammatory response initiator: once activated through formation of an inflammasome complex, it initiates a pro-inflammatory response through the cleavage of the two inflammatory cytokines IL1B and IL18, releasing the mature cytokines which are involved in a variety of inflammatory processes. Cleaves a tetrapeptide after an Asp residue at position P1. Also initiates pyroptosis, a programmed lytic cell death pathway, through cleavage of GSDMD. In contrast to cleavage of interleukin IL1B, recognition and cleavage of GSDMD is not strictly dependent on the consensus cleavage site but depends on an exosite interface on CASP1 that recognizes and binds the Gasdermin-D, C-terminal (GSDMD-CT) part. Cleaves and activates CASP7 in response to bacterial infection, promoting plasma membrane repair. Upon inflammasome activation, during DNA virus infection but not RNA virus challenge, controls antiviral immunity through the cleavage of CGAS, rendering it inactive. In apoptotic cells, cleaves SPHK2 which is released from cells and remains enzymatically active extracellularly. The protein is Caspase-1 (CASP1) of Canis lupus familiaris (Dog).